The sequence spans 578 residues: CTP synthase 2 (578 aa).

The 260-residue stretch at 305 to 564 (KIALVGKYTN…VAAASGTLGE (260 aa)) folds into the Glutamine amidotransferase type-1 domain. Catalysis depends on for GATase activity residues C404, H537, and E539.

The protein belongs to the CTP synthase family. In terms of assembly, homodimer. Oligomerizes to a tetramer in the presence of its substrates UTP and ATP. Mg(2+) serves as cofactor.

The protein localises to the cytoplasm. The enzyme catalyses UTP + L-glutamine + ATP + H2O = CTP + L-glutamate + ADP + phosphate + 2 H(+). It functions in the pathway pyrimidine metabolism; CTP biosynthesis via de novo pathway; CTP from UDP: step 2/2. Its activity is regulated as follows. Activated by GTP. Subject to allosteric product inhibition by CTP. Inhibited by p-chloromercuriphenylsulfonic acid, N-ethylmaleimide and cyclopentenylcytosine (CPEC). Functionally, catalyzes the ATP-dependent amination of UTP to CTP with either L-glutamine or ammonia as the source of nitrogen. Plays an important role in the regulation of phospholipid synthesis. This Saccharomyces cerevisiae (strain ATCC 204508 / S288c) (Baker's yeast) protein is CTP synthase 2 (URA8).